The following is a 271-amino-acid chain: Neurexophilin-1 (271 aa).

A signal peptide spans 1–21 (MQAACWYVLLLLQPTVYLVTC). Residues 22-97 (ANLTNGGKSE…WDWLRNSTDL (76 aa)) are II. N-linked (GlcNAc...) asparagine glycosylation is found at Asn23, Asn68, Asn93, Asn146, Asn156, and Asn162. Residues 98–176 (QEPRPRAKRR…LVPPTKIVEF (79 aa)) are III. The interval 177-185 (DLAQQTVID) is IV (linker domain). The interval 186–271 (AKDSKSFNCR…HSDTPYFPSG (86 aa)) is v (Cys-rich).

Belongs to the neurexophilin family. May be proteolytically processed at the boundary between the N-terminal non-conserved and the central conserved domain in neuron-like cells.

Its subcellular location is the secreted. May be signaling molecules that resemble neuropeptides. Ligand for alpha-neurexins. This is Neurexophilin-1 (NXPH1) from Bos taurus (Bovine).